We begin with the raw amino-acid sequence, 234 residues long: Orotidine 5'-phosphate decarboxylase (234 aa).

Substrate contacts are provided by residues D14, K36, 63-72 (DLKFHDIPNT), T123, R184, Q193, G213, and R214. The Proton donor role is filled by K65.

It belongs to the OMP decarboxylase family. Type 1 subfamily. In terms of assembly, homodimer.

The catalysed reaction is orotidine 5'-phosphate + H(+) = UMP + CO2. It participates in pyrimidine metabolism; UMP biosynthesis via de novo pathway; UMP from orotate: step 2/2. Its function is as follows. Catalyzes the decarboxylation of orotidine 5'-monophosphate (OMP) to uridine 5'-monophosphate (UMP). The chain is Orotidine 5'-phosphate decarboxylase from Pseudoalteromonas translucida (strain TAC 125).